A 227-amino-acid chain; its full sequence is Orotidine 5'-phosphate decarboxylase (227 aa).

Substrate-binding positions include Asp12, Lys34, Asp61 to Thr70, Thr117, Arg178, Gln187, Gly207, and Arg208. Residue Lys63 is the Proton donor of the active site.

This sequence belongs to the OMP decarboxylase family. Type 1 subfamily. Homodimer.

It catalyses the reaction orotidine 5'-phosphate + H(+) = UMP + CO2. Its pathway is pyrimidine metabolism; UMP biosynthesis via de novo pathway; UMP from orotate: step 2/2. Its function is as follows. Catalyzes the decarboxylation of orotidine 5'-monophosphate (OMP) to uridine 5'-monophosphate (UMP). The sequence is that of Orotidine 5'-phosphate decarboxylase from Anaeromyxobacter sp. (strain K).